Consider the following 560-residue polypeptide: DNA ligase B (560 aa).

The active-site N6-AMP-lysine intermediate is the lysine 124.

The protein belongs to the NAD-dependent DNA ligase family. LigB subfamily.

The catalysed reaction is NAD(+) + (deoxyribonucleotide)n-3'-hydroxyl + 5'-phospho-(deoxyribonucleotide)m = (deoxyribonucleotide)n+m + AMP + beta-nicotinamide D-nucleotide.. Its function is as follows. Catalyzes the formation of phosphodiester linkages between 5'-phosphoryl and 3'-hydroxyl groups in double-stranded DNA using NAD as a coenzyme and as the energy source for the reaction. The chain is DNA ligase B from Shigella flexneri.